A 209-amino-acid chain; its full sequence is Uracil phosphoribosyltransferase (209 aa).

Residues R79, R104, and 131–139 (DPMLATGGS) each bind 5-phospho-alpha-D-ribose 1-diphosphate. Uracil is bound by residues I194 and 199–201 (GDA). D200 provides a ligand contact to 5-phospho-alpha-D-ribose 1-diphosphate.

This sequence belongs to the UPRTase family. Mg(2+) serves as cofactor.

It carries out the reaction UMP + diphosphate = 5-phospho-alpha-D-ribose 1-diphosphate + uracil. It participates in pyrimidine metabolism; UMP biosynthesis via salvage pathway; UMP from uracil: step 1/1. Allosterically activated by GTP. Functionally, catalyzes the conversion of uracil and 5-phospho-alpha-D-ribose 1-diphosphate (PRPP) to UMP and diphosphate. This chain is Uracil phosphoribosyltransferase, found in Streptococcus thermophilus (strain CNRZ 1066).